The following is a 603-amino-acid chain: MTDVPVSRIRNFSIIAHIDHGKSTLADRLLQITGTVAQREMKEQFLDNMDLERERGITIKLQAARMDYTAKDGQKYVLNLIDTPGHVDFSYEVSRSLAACEGALLVVDASQGVEAQTLANVYLALENNLEIIPVLNKIDLPSAEPERVAAEIEEVVGLDCSEAIRASAKAGIGINDILESIVQLVPPPQDTLEEPFRALIFDSYYDAYRGVIVYFRVMDGRVKKGDKIRFMASGKEFVIDELGILSPQQVQVNELHAGEVGYLAAAIKTVADARVGDTITLTAKPAQEPLPGYTEAKPMVFCGLFPTDADQYADLKDALEKLKLNDAALSYEPETSSAMGFGFRCGFLGLLHMEIVQERLEREYNLDLITTAPSVVYQVTTTDGEIVEVDNPSLLPSPQKREKIEEPYIQVEMITPETYVGALMELCQSRRGVFKDMRYFTKTRTALIYELPLAEVVTDFFDQLKSRSRGYASMEYQLIGYRENELVKLDIMVNGDPVDALAMIVHRDKAYYVGRALTEKLKELIPRHQFKVPIQAAIGSKIIASEHIPALRKDVLAKCYGGDISRKKKLLDKQAKGKKRMKAIGTVDVPQEAFMAVLKLDPQ.

A tr-type G domain is found at 7–189 (SRIRNFSIIA…SIVQLVPPPQ (183 aa)). Residues 19–24 (DHGKST) and 136–139 (NKID) each bind GTP.

It belongs to the TRAFAC class translation factor GTPase superfamily. Classic translation factor GTPase family. LepA subfamily.

It localises to the cell inner membrane. It catalyses the reaction GTP + H2O = GDP + phosphate + H(+). In terms of biological role, required for accurate and efficient protein synthesis under certain stress conditions. May act as a fidelity factor of the translation reaction, by catalyzing a one-codon backward translocation of tRNAs on improperly translocated ribosomes. Back-translocation proceeds from a post-translocation (POST) complex to a pre-translocation (PRE) complex, thus giving elongation factor G a second chance to translocate the tRNAs correctly. Binds to ribosomes in a GTP-dependent manner. In Microcystis aeruginosa (strain NIES-843 / IAM M-2473), this protein is Elongation factor 4.